The following is a 169-amino-acid chain: Sorting nexin-24 (169 aa).

An N-acetylmethionine modification is found at methionine 1. Residues 1–125 (MEVYIPSFRY…SFDETESEES (125 aa)) enclose the PX domain. Arginine 38, serine 40, lysine 61, and arginine 74 together coordinate a 1,2-diacyl-sn-glycero-3-phospho-(1D-myo-inositol-3-phosphate). Phosphoserine is present on residues serine 113 and serine 116.

This sequence belongs to the sorting nexin family.

The protein localises to the cytoplasmic vesicle membrane. Functionally, may be involved in several stages of intracellular trafficking. The protein is Sorting nexin-24 (SNX24) of Homo sapiens (Human).